The following is a 321-amino-acid chain: Coiled-coil domain-containing protein 42-like 1 (321 aa).

Coiled coils occupy residues 36–144 and 202–229; these read IRRL…EKCH and IVQF…WELR.

The protein belongs to the CFAP73 family.

The protein is Coiled-coil domain-containing protein 42-like 1 of Xenopus laevis (African clawed frog).